A 918-amino-acid chain; its full sequence is Translation initiation factor IF-2 (918 aa).

The disordered stretch occupies residues 39-321 (DDASEKHLRN…KRDGRMKETT (283 aa)). Positions 95–146 (KSSNNESTTRNNNNNKNGNQNRNNTNGRPNNNQNRPNNNRNQNNNRNGNRPN) are enriched in low complexity. Residues 148–158 (PKRDEKQDRIR) are compositionally biased toward basic and acidic residues. A compositionally biased stretch (low complexity) spans 159–174 (ASVAEAARMAAQANRE). Polar residues predominate over residues 180–190 (PQANRQRTNSA). 3 stretches are compositionally biased toward low complexity: residues 201 to 231 (NNQNRPNNNNRNGNNVNRTNNNNRPNNNNRN), 237 to 267 (SRPNNTNQTTNNRPANNTTRPAAPAATTANN), and 278 to 296 (GRNNNSRGGNRFGNNQNRP). Over residues 302-313 (RKNKKRNRKAKR) the composition is skewed to basic residues. A tr-type G domain is found at 419-588 (SRPPVVTIMG…LLQAEVLELK (170 aa)). Positions 428–435 (GHVDHGKT) are G1. Residue 428-435 (GHVDHGKT) participates in GTP binding. The tract at residues 453–457 (GITQG) is G2. The G3 stretch occupies residues 474-477 (DTPG). Residues 474–478 (DTPGH) and 528–531 (NKID) each bind GTP. The interval 528 to 531 (NKID) is G4. Residues 564–566 (SAK) are G5.

This sequence belongs to the TRAFAC class translation factor GTPase superfamily. Classic translation factor GTPase family. IF-2 subfamily.

It is found in the cytoplasm. One of the essential components for the initiation of protein synthesis. Protects formylmethionyl-tRNA from spontaneous hydrolysis and promotes its binding to the 30S ribosomal subunits. Also involved in the hydrolysis of GTP during the formation of the 70S ribosomal complex. The polypeptide is Translation initiation factor IF-2 (Pediococcus pentosaceus (strain ATCC 25745 / CCUG 21536 / LMG 10740 / 183-1w)).